The primary structure comprises 2303 residues: Genome polyprotein (2303 aa).

Residues 3 to 14 fold into a zinc finger; the sequence is CKHGYPDVCPIC. Positions 30–46 are acidic; it reads DGEWFPTDLLCVDLDDD. Positions 60–73 are theilo; sequence MEWTDVPLVCDTVM. The interval 73 to 93 is disordered; that stretch reads MEPQGNASSSDKSNSQSSGNE. The N-myristoyl glycine; by host moiety is linked to residue G77. The span at 80 to 90 shows a compositional bias: low complexity; that stretch reads SSSDKSNSQSS. C501 and C503 are joined by a disulfide. The host EIF4E binding stretch occupies residues 1041–1047; that stretch reads YYKQRLI. Positions 1283–1448 constitute an SF3 helicase domain; sequence IPLASLCEKF…CKTPAGMLDI (166 aa). 1312–1319 serves as a coordination point for ATP; that stretch reads GAAGQGKS. Y1608 is subject to O-(5'-phospho-RNA)-tyrosine. A Peptidase C3 domain is found at 1636-1829; that stretch reads NPVMDFELFC…AATIITRELI (194 aa). Residues H1680, D1714, and C1793 each act as for protease 3C activity in the active site. One can recognise a RdRp catalytic domain in the interval 2071–2189; it reads NYVYDVDYSN…GTNYQIDFNL (119 aa). Residues D2077 and D2175 each act as for RdRp activity in the active site.

It belongs to the picornaviruses polyprotein family. Interacts with host EIF4E. Interacts with the leader protein. As to quaternary structure, interacts with host RAN; the complex L-RAN recruits cellular kinases responsible for the L-induced nucleocytoplasmic trafficking inhibition. The complex L-RAN can further bind to the host exportins XPO1/CRM1 and CSE1L/CAS. Interacts with the protein 2A. Interacts with host RNASEL; this interaction prevents RNASEL activation by its substrate 2'-5' oligoadenylates. Post-translationally, phosphorylated. Specific enzymatic cleavages by the viral protease in vivo yield a variety of precursors and mature proteins. The polyprotein seems to be cotranslationally cleaved at the 2A/2B junction by a ribosomal skip from one codon to the next without formation of a peptide bond. This process would release the P1-2A peptide from the translational complex. In terms of processing, during virion maturation, immature virions are rendered infectious following cleavage of VP0 into VP4 and VP2. This maturation seems to be an autocatalytic event triggered by the presence of RNA in the capsid and is followed by a conformational change of the particle. Post-translationally, uridylylated by the polymerase and is covalently linked to the 5'-end of genomic RNA. This uridylylated form acts as a nucleotide-peptide primer for the polymerase. Myristoylation is required during RNA encapsidation and formation of the mature virus particle.

The protein localises to the virion. Its subcellular location is the host cytoplasm. It localises to the host nucleus. It is found in the host nucleolus. The protein resides in the host cytoplasmic vesicle membrane. The enzyme catalyses RNA(n) + a ribonucleoside 5'-triphosphate = RNA(n+1) + diphosphate. It carries out the reaction ATP + H2O = ADP + phosphate + H(+). The catalysed reaction is Selective cleavage of Gln-|-Gly bond in the poliovirus polyprotein. In other picornavirus reactions Glu may be substituted for Gln, and Ser or Thr for Gly.. In terms of biological role, forms a complex with host RAN and probably binds to exportins carrying activated MAPK in order to mediate the hyperphosphorylation of host Phe/Gly containing nuclear pore proteins (Nups) resulting in cessation of active nucleocytoplasmic transport. Proteins with NLS signals fail to import, cellular mRNAs fail to export, and some proteins small enough for diffusion are not retained anymore (efflux). The resulting inhibition of cellular protein synthesis serves to ensure maximal viral gene expression and to evade host immune response. The leader protein also inhibits host interferon regulatory factor 3 (IRF3) dimerization, thereby blocking the transcriptional activation of IFN genes. Binds to host RNase L thereby preventing its activation by 2'-5' oligoadenylates in order to counteract the antiviral interferon-inducible OAS/RNase L pathway. Inhibits the integrated stress response (ISR) in the infected cell. Inhibits the host EIF2AK2/PKR by rendering this kinase unable to detect double-stranded RNA. Also impairs host stress granule formation probably by acting on a step downstream of EIF2AK2/PKR activation. Functionally, forms an icosahedral capsid of pseudo T=3 symmetry with capsid proteins VP2 and VP3. Together they form an icosahedral capsid composed of 60 copies of each VP1, VP2, and VP3, with a diameter of approximately 300 Angstroms. VP4 lies on the inner surface of the protein shell formed by VP1, VP2 and VP3. All the three latter proteins contain a beta-sheet structure called beta-barrel jelly roll. VP1 is situated at the 12 fivefold axes, whereas VP2 and VP3 are located at the quasi-sixfold axes. Lies on the inner surface of the capsid shell. After binding to the host receptor, the capsid undergoes conformational changes. Capsid protein VP4 is released, capsid protein VP1 N-terminus is externalized, and together, they shape a pore in the host membrane through which the viral genome is translocated into the host cell cytoplasm. After genome has been released, the channel shrinks. Its function is as follows. VP0 precursor is a component of immature procapsids. In terms of biological role, involved in host translation shutoff by inhibiting cap-dependent mRNA translation. Nuclear localization is required for this function. The resulting inhibition of cellular protein synthesis serves to ensure maximal viral gene expression and to evade host immune response. Inhibits the phosphorylation of the leader protein. Binds to the RNA stem-loop essential for the ribosomal frameshift event and trans-activates the production of protein 2B*. Functionally, affects membrane integrity and causes an increase in membrane permeability. Associates with and induces structural rearrangements of intracellular membranes. It displays RNA-binding, nucleotide binding and NTPase activities. Its function is as follows. Serves as membrane anchor via its hydrophobic domain. In terms of biological role, forms a primer, VPg-pU, which is utilized by the polymerase for the initiation of RNA chains. Functionally, cysteine protease that generates mature viral proteins from the precursor polyprotein. In addition to its proteolytic activity, it binds to viral RNA, and thus influences viral genome replication. RNA and substrate cooperatively bind to the protease. Cleaves host PABP1, this cleavage is important for viral replication. Replicates the genomic and antigenomic RNAs by recognizing replications specific signals. Performs VPg uridylylation. The chain is Genome polyprotein from Mus musculus (Mouse).